Consider the following 47-residue polypeptide: Large ribosomal subunit protein bL34 (47 aa).

This sequence belongs to the bacterial ribosomal protein bL34 family.

This is Large ribosomal subunit protein bL34 from Mycobacterium tuberculosis (strain ATCC 25177 / H37Ra).